The chain runs to 520 residues: Cytochrome P450 4F8 (520 aa).

A helical transmembrane segment spans residues 15 to 37; the sequence is AASPWLLLLVVGASWLLARILAW. A heme-binding site is contributed by cysteine 468.

This sequence belongs to the cytochrome P450 family. It depends on heme as a cofactor. As to expression, expressed in the epithelium of seminal vesicles, in renal cortex, in adult and fetal liver, in epidermis, in corneal epithelium, in sweat glands, hair follicles, epithelial linings of the ampulla of vas deferens and of the stomach and small intestine, as well as in the transitional epithelium of the bladder and ureter (at protein level). In the epidermis, expressed from the basal cell to the granular cell layers. In the corneal epithelium, expressed in all cell layers. Also detected in prostate. Up-regulated in the epidermis of psoriatic lesions.

The protein localises to the endoplasmic reticulum membrane. Its subcellular location is the microsome membrane. The catalysed reaction is an organic molecule + reduced [NADPH--hemoprotein reductase] + O2 = an alcohol + oxidized [NADPH--hemoprotein reductase] + H2O + H(+). It catalyses the reaction (5Z,8Z,11Z,14Z)-eicosatetraenoate + reduced [NADPH--hemoprotein reductase] + O2 = (18R)-hydroxy-(5Z,8Z,11Z,14Z)-eicosatetraenoate + oxidized [NADPH--hemoprotein reductase] + H2O + H(+). The enzyme catalyses (4Z,7Z,10Z,13Z,16Z)-docosapentaenoate + reduced [NADPH--hemoprotein reductase] + O2 = 20-hydroxy-(4Z,7Z,10Z,13Z,16Z)-docosapentaenoate + oxidized [NADPH--hemoprotein reductase] + H2O + H(+). It carries out the reaction prostaglandin H1 + reduced [NADPH--hemoprotein reductase] + O2 = 19-hydroxyprostaglandin H1 + oxidized [NADPH--hemoprotein reductase] + H2O + H(+). The catalysed reaction is prostaglandin H2 + reduced [NADPH--hemoprotein reductase] + O2 = 19-hydroxyprostaglandin H2 + oxidized [NADPH--hemoprotein reductase] + H2O + H(+). It catalyses the reaction prostaglandin I2 + reduced [NADPH--hemoprotein reductase] + O2 = 19-hydroxy-prostaglandin I2 + oxidized [NADPH--hemoprotein reductase] + H2O + H(+). The enzyme catalyses (4Z,7Z,10Z,13Z,16Z,19Z)-docosahexaenoate + reduced [NADPH--hemoprotein reductase] + O2 = 10,11-epoxy-(4Z,7Z,13Z,16Z,19Z)-docosapentaenoate + oxidized [NADPH--hemoprotein reductase] + H2O + H(+). It carries out the reaction (4Z,7Z,10Z,13Z,16Z,19Z)-docosahexaenoate + reduced [NADPH--hemoprotein reductase] + O2 = 13,14-epoxy-(4Z,7Z,10Z,16Z,19Z)-docosapentaenoate + oxidized [NADPH--hemoprotein reductase] + H2O + H(+). The catalysed reaction is (4Z,7Z,10Z,13Z,16Z,19Z)-docosahexaenoate + reduced [NADPH--hemoprotein reductase] + O2 = 16,17-epoxy-(4Z,7Z,10Z,13Z,19Z)-docosapentaenoate + oxidized [NADPH--hemoprotein reductase] + H2O + H(+). It catalyses the reaction (4Z,7Z,10Z,13Z,16Z,19Z)-docosahexaenoate + reduced [NADPH--hemoprotein reductase] + O2 = 19,20-epoxy-(4Z,7Z,10Z,13Z,16Z)-docosapentaenoate + oxidized [NADPH--hemoprotein reductase] + H2O + H(+). The enzyme catalyses (7Z,10Z,13Z,16Z,19Z)-docosapentaenoate + reduced [NADPH--hemoprotein reductase] + O2 = 10,11-epoxy-(7Z,13Z,16Z,19Z)-docosatetraenoate + oxidized [NADPH--hemoprotein reductase] + H2O + H(+). It carries out the reaction (7Z,10Z,13Z,16Z,19Z)-docosapentaenoate + reduced [NADPH--hemoprotein reductase] + O2 = 13,14-epoxy-(7Z,10Z,16Z,19Z)-docosatetraenoate + oxidized [NADPH--hemoprotein reductase] + H2O + H(+). The catalysed reaction is (7Z,10Z,13Z,16Z,19Z)-docosapentaenoate + reduced [NADPH--hemoprotein reductase] + O2 = 16,17-epoxy-(7Z,10Z,13Z,19Z)-docosatetraenoate + oxidized [NADPH--hemoprotein reductase] + H2O + H(+). It catalyses the reaction (7Z,10Z,13Z,16Z,19Z)-docosapentaenoate + reduced [NADPH--hemoprotein reductase] + O2 = 19,20-epoxy-(7Z,10Z,13Z,16Z)-docosatetraenoate + oxidized [NADPH--hemoprotein reductase] + H2O + H(+). It functions in the pathway lipid metabolism; fatty acid metabolism. In terms of biological role, a cytochrome P450 monooxygenase involved in the metabolism of endogenous polyunsaturated fatty acids (PUFAs) and their oxygenated derivatives (oxylipins). Mechanistically, uses molecular oxygen inserting one oxygen atom into a substrate, and reducing the second into a water molecule, with two electrons provided by NADPH via cytochrome P450 reductase (CPR; NADPH-ferrihemoprotein reductase). Catalyzes the hydroxylation of carbon hydrogen bonds, with preference for omega-1 and omega-2 positions. Hydroxylates (5Z,8Z,11Z,14Z)-eicosatetraenoic acid (arachidonate) predominantly at omega-2 position to form (18R)-hydroxyeicosatetraenoic acid (18R-HETE). Exhibits omega-1 hydroxylase activity toward prostaglandin (PG) H1, PGH2 and PGI2. Catalyzes the epoxidation of double bonds of PUFAs, including docosahexaenoic and docosapentaenoic acids. Shows little activity against PGD2, PGE1, PGE2, PGF2alpha, and leukotriene B4. The polypeptide is Cytochrome P450 4F8 (Homo sapiens (Human)).